The following is a 425-amino-acid chain: Serine--tRNA ligase (425 aa).

Residue 232-234 (TSE) participates in L-serine binding. ATP-binding positions include 263-265 (RRE) and Val-279. Glu-286 contributes to the L-serine binding site. 350 to 353 (EAVS) lines the ATP pocket. Thr-387 provides a ligand contact to L-serine.

This sequence belongs to the class-II aminoacyl-tRNA synthetase family. Type-1 seryl-tRNA synthetase subfamily. In terms of assembly, homodimer. The tRNA molecule binds across the dimer.

It is found in the cytoplasm. The enzyme catalyses tRNA(Ser) + L-serine + ATP = L-seryl-tRNA(Ser) + AMP + diphosphate + H(+). It catalyses the reaction tRNA(Sec) + L-serine + ATP = L-seryl-tRNA(Sec) + AMP + diphosphate + H(+). The protein operates within aminoacyl-tRNA biosynthesis; selenocysteinyl-tRNA(Sec) biosynthesis; L-seryl-tRNA(Sec) from L-serine and tRNA(Sec): step 1/1. Functionally, catalyzes the attachment of serine to tRNA(Ser). Is also able to aminoacylate tRNA(Sec) with serine, to form the misacylated tRNA L-seryl-tRNA(Sec), which will be further converted into selenocysteinyl-tRNA(Sec). The protein is Serine--tRNA ligase of Methanoculleus marisnigri (strain ATCC 35101 / DSM 1498 / JR1).